We begin with the raw amino-acid sequence, 273 residues long: Replication factor A protein 2 (273 aa).

A compositionally biased stretch (polar residues) spans 1–13 (MATYQPYNEYSSV). The tract at residues 1–38 (MATYQPYNEYSSVTGGGFENSESRPGSGESETNTRVNT) is disordered. S27 carries the post-translational modification Phosphoserine. Positions 29 to 38 (ESETNTRVNT) are enriched in polar residues. Positions 69 to 157 (VCFVGVVRNI…NIQYAVIKPI (89 aa)) form a DNA-binding region, OB. S122 is modified (phosphoserine).

This sequence belongs to the replication factor A protein 2 family. Heterotrimer of 69, 36, and 13 kDa chains. The DNA-binding activity may reside exclusively on the 69 kDa subunit. Interacts with MCM10. In terms of processing, phosphorylated in a cell cycle-dependent manner with phosphorylation increasing at the entry in S phase and dephosphorylation occurring at mitosis. Post-translationally, the N-terminus is blocked.

The protein localises to the nucleus. Functionally, binds to single-stranded sequences participating in DNA replication in addition to those mediating transcriptional repression (URS1) and activation (CAR1). Stimulates the activity of a cognate strand exchange protein (SEP1). It cooperates with T-AG and DNA topoisomerase I to unwind template DNA containing the simian virus 40 origin of DNA replication. This chain is Replication factor A protein 2 (RFA2), found in Saccharomyces cerevisiae (strain ATCC 204508 / S288c) (Baker's yeast).